The following is a 612-amino-acid chain: Poly(A) RNA polymerase, mitochondrial (612 aa).

The transit peptide at 1-57 (MNSLVRRSAQQLSLWRTYCIKHNASEAASPGRNAGRPNYEEFIGRHQRQAQCSIVVQ) directs the protein to the mitochondrion. ATP is bound by residues 83 to 89 (YCVRQDE) and 228 to 229 (GC). Residues Asp-230 and Asp-232 each coordinate Mg(2+). Residues 427–463 (SLSELLLQFFEFYSQFDFHNRAISLNEGKPLSKPDHS) form the PAP-associated domain. 2 disordered regions span residues 555-574 (AGAT…KSAS) and 588-612 (SELK…RRSR).

It belongs to the DNA polymerase type-B-like family. The cofactor is Mg(2+). Mn(2+) is required as a cofactor.

The protein localises to the mitochondrion. It catalyses the reaction RNA(n) + ATP = RNA(n)-3'-adenine ribonucleotide + diphosphate. In terms of biological role, polymerase that creates the 3' poly(A) tail of mitochondrial transcripts. This is not required for transcript stability or translation but may maintain mRNA integrity by protecting 3' termini from degradation. In Drosophila melanogaster (Fruit fly), this protein is Poly(A) RNA polymerase, mitochondrial.